We begin with the raw amino-acid sequence, 59 residues long: Large ribosomal subunit protein bL32 (59 aa).

Over residues 1–19 the composition is skewed to basic residues; that stretch reads MPVPKRRMSRSNTRSRRAQ. The interval 1–20 is disordered; it reads MPVPKRRMSRSNTRSRRAQW.

Belongs to the bacterial ribosomal protein bL32 family.

The polypeptide is Large ribosomal subunit protein bL32 (Acidothermus cellulolyticus (strain ATCC 43068 / DSM 8971 / 11B)).